The sequence spans 206 residues: Ribosome maturation factor RimP (206 aa).

The protein belongs to the RimP family.

The protein localises to the cytoplasm. Required for maturation of 30S ribosomal subunits. This Paracoccus denitrificans (strain Pd 1222) protein is Ribosome maturation factor RimP.